A 209-amino-acid polypeptide reads, in one-letter code: V-type ATP synthase subunit D (209 aa).

This sequence belongs to the V-ATPase D subunit family.

Produces ATP from ADP in the presence of a proton gradient across the membrane. The polypeptide is V-type ATP synthase subunit D (Thermoanaerobacter pseudethanolicus (strain ATCC 33223 / 39E) (Clostridium thermohydrosulfuricum)).